The following is a 343-amino-acid chain: Glyceraldehyde-3-phosphate dehydrogenase (343 aa).

Residues 13–14 and Gly112 contribute to the NAD(+) site; that span reads TI. Residue 141–143 coordinates D-glyceraldehyde 3-phosphate; it reads SCN. Cys142 functions as the Nucleophile in the catalytic mechanism. Residue Arg170 coordinates NAD(+). 196–197 serves as a coordination point for D-glyceraldehyde 3-phosphate; the sequence is HA. An NAD(+)-binding site is contributed by Gln303.

The protein belongs to the glyceraldehyde-3-phosphate dehydrogenase family. Homotetramer.

It is found in the cytoplasm. The catalysed reaction is D-glyceraldehyde 3-phosphate + phosphate + NADP(+) = (2R)-3-phospho-glyceroyl phosphate + NADPH + H(+). The enzyme catalyses D-glyceraldehyde 3-phosphate + phosphate + NAD(+) = (2R)-3-phospho-glyceroyl phosphate + NADH + H(+). The protein operates within carbohydrate degradation; glycolysis; pyruvate from D-glyceraldehyde 3-phosphate: step 1/5. The sequence is that of Glyceraldehyde-3-phosphate dehydrogenase (gap) from Aeropyrum pernix (strain ATCC 700893 / DSM 11879 / JCM 9820 / NBRC 100138 / K1).